A 382-amino-acid polypeptide reads, in one-letter code: UDP-N-acetylglucosamine--N-acetylmuramyl-(pentapeptide) pyrophosphoryl-undecaprenol N-acetylglucosamine transferase (382 aa).

UDP-N-acetyl-alpha-D-glucosamine-binding positions include 11-13, Asn124, Arg164, Ser192, and Gln314; that span reads TGG.

Belongs to the glycosyltransferase 28 family. MurG subfamily.

It is found in the cell membrane. It carries out the reaction di-trans,octa-cis-undecaprenyl diphospho-N-acetyl-alpha-D-muramoyl-L-alanyl-D-glutamyl-meso-2,6-diaminopimeloyl-D-alanyl-D-alanine + UDP-N-acetyl-alpha-D-glucosamine = di-trans,octa-cis-undecaprenyl diphospho-[N-acetyl-alpha-D-glucosaminyl-(1-&gt;4)]-N-acetyl-alpha-D-muramoyl-L-alanyl-D-glutamyl-meso-2,6-diaminopimeloyl-D-alanyl-D-alanine + UDP + H(+). The protein operates within cell wall biogenesis; peptidoglycan biosynthesis. In terms of biological role, cell wall formation. Catalyzes the transfer of a GlcNAc subunit on undecaprenyl-pyrophosphoryl-MurNAc-pentapeptide (lipid intermediate I) to form undecaprenyl-pyrophosphoryl-MurNAc-(pentapeptide)GlcNAc (lipid intermediate II). In Deinococcus deserti (strain DSM 17065 / CIP 109153 / LMG 22923 / VCD115), this protein is UDP-N-acetylglucosamine--N-acetylmuramyl-(pentapeptide) pyrophosphoryl-undecaprenol N-acetylglucosamine transferase.